Consider the following 533-residue polypeptide: Peptide chain release factor 3 (533 aa).

The region spanning 9–284 is the tr-type G domain; it reads ARRRTFAIIS…ALCQLSPPPL (276 aa). GTP is bound by residues 18 to 25, 95 to 99, and 149 to 152; these read SHPDAGKT, DTPGH, and NKLD.

It belongs to the TRAFAC class translation factor GTPase superfamily. Classic translation factor GTPase family. PrfC subfamily.

The protein resides in the cytoplasm. Functionally, increases the formation of ribosomal termination complexes and stimulates activities of RF-1 and RF-2. It binds guanine nucleotides and has strong preference for UGA stop codons. It may interact directly with the ribosome. The stimulation of RF-1 and RF-2 is significantly reduced by GTP and GDP, but not by GMP. This Cupriavidus pinatubonensis (strain JMP 134 / LMG 1197) (Cupriavidus necator (strain JMP 134)) protein is Peptide chain release factor 3.